A 397-amino-acid chain; its full sequence is Probable peptidoglycan glycosyltransferase FtsW (397 aa).

Residues 1–26 (MSPRNSALERFRQHQKIPEKRWQRLA) are Cytoplasmic-facing. Residues 27–47 (FPDVGLLLCWLALIVIGMVMV) form a helical membrane-spanning segment. Residues 48–69 (TSSSLSEAHVERLSTHHFAIRQ) lie on the Periplasmic side of the membrane. The chain crosses the membrane as a helical span at residues 70–90 (GIFYVGSSIFAYIAFMLGTNF). At 91–96 (YREKAK) the chain is on the cytoplasmic side. The helical transmembrane segment at 97-117 (FILGLAFLGLLLVYAPGIGVV) threads the bilayer. Topologically, residues 118–126 (VNGSRRWLN) are periplasmic. The helical transmembrane segment at 127–147 (LGVINLQVGEFAKLAVFIFTA) threads the bilayer. At 148–159 (AYLQHHTQRLDH) the chain is on the cytoplasmic side. The chain crosses the membrane as a helical span at residues 160 to 180 (SWQPIIGLLAVTACFALMFYL). Topologically, residues 181–185 (QPDFG) are periplasmic. The helical transmembrane segment at 186–206 (TMVVIVATVLGMLFLSGVSIW) threads the bilayer. Arginine 207 is a topological domain (cytoplasmic). The helical transmembrane segment at 208 to 228 (LLLLGVLIAPAMVWVLISESY) threads the bilayer. Over 229 to 294 (RLRRLTTFIN…IFSIIAEETG (66 aa)) the chain is Periplasmic. Residues 295-315 (LVGALIVMAILMILVWRAFAI) traverse the membrane as a helical segment. Over 316 to 328 (GYLADRMRKRFSS) the chain is Cytoplasmic. The chain crosses the membrane as a helical span at residues 329 to 349 (LLAYGIGLWLGLQSLINIGVT). At 350-359 (TGALPTKGLT) the chain is on the periplasmic side. Residues 360-380 (LPLISYGGSSILMTSIALAIL) traverse the membrane as a helical segment. Topologically, residues 381–397 (ARIDAESRFIARLEGKI) are cytoplasmic.

Belongs to the SEDS family. FtsW subfamily.

Its subcellular location is the cell inner membrane. It catalyses the reaction [GlcNAc-(1-&gt;4)-Mur2Ac(oyl-L-Ala-gamma-D-Glu-L-Lys-D-Ala-D-Ala)](n)-di-trans,octa-cis-undecaprenyl diphosphate + beta-D-GlcNAc-(1-&gt;4)-Mur2Ac(oyl-L-Ala-gamma-D-Glu-L-Lys-D-Ala-D-Ala)-di-trans,octa-cis-undecaprenyl diphosphate = [GlcNAc-(1-&gt;4)-Mur2Ac(oyl-L-Ala-gamma-D-Glu-L-Lys-D-Ala-D-Ala)](n+1)-di-trans,octa-cis-undecaprenyl diphosphate + di-trans,octa-cis-undecaprenyl diphosphate + H(+). Its pathway is cell wall biogenesis; peptidoglycan biosynthesis. Functionally, peptidoglycan polymerase that is essential for cell division. The sequence is that of Probable peptidoglycan glycosyltransferase FtsW from Dichelobacter nodosus (strain VCS1703A).